The primary structure comprises 156 residues: Ribonuclease H (156 aa).

In terms of domain architecture, RNase H type-1 spans 2–144 (TMKNVQAFTD…CDVLARTQAS (143 aa)). Asp-11, Glu-49, Asp-71, and Asp-136 together coordinate Mg(2+).

It belongs to the RNase H family. As to quaternary structure, monomer. The cofactor is Mg(2+).

It localises to the cytoplasm. The enzyme catalyses Endonucleolytic cleavage to 5'-phosphomonoester.. Endonuclease that specifically degrades the RNA of RNA-DNA hybrids. This chain is Ribonuclease H, found in Nitratidesulfovibrio vulgaris (strain DSM 19637 / Miyazaki F) (Desulfovibrio vulgaris).